Reading from the N-terminus, the 393-residue chain is Homeobox protein knotted-1-like 4 (393 aa).

Over residues 1–13 (MAFHNNHFNHFTD) the composition is skewed to polar residues. Disordered regions lie at residues 1-39 (MAFH…PPNW) and 81-114 (QRGN…EKKE). An ELK domain is found at 286–306 (ELKHELKQGYKEKIVDIREEI). The segment at residues 307–370 (LRKRRAGKLP…NQRKRNWHSN (64 aa)) is a DNA-binding region (homeobox; TALE-type). A disordered region spans residues 363 to 393 (RKRNWHSNPSSSTVSKNKRRSNAGENSGRDR). Residues 368–377 (HSNPSSSTVS) show a composition bias toward polar residues.

Belongs to the TALE/KNOX homeobox family. As to quaternary structure, may form heterodimeric complex with the TALE/BELL proteins. Interacts with OFP1, OFP2, OFP4 and OFP12. Interacts with KNATM-B.

Its subcellular location is the nucleus. In Arabidopsis thaliana (Mouse-ear cress), this protein is Homeobox protein knotted-1-like 4 (KNAT4).